The chain runs to 463 residues: Lipase 6 (463 aa).

An N-terminal signal peptide occupies residues 1 to 16 (MRDLILFLSLLHTIFA). Cys-112 and Cys-285 are disulfide-bonded. The Charge relay system role is filled by Ser-196. N-linked (GlcNAc...) asparagine glycosylation is present at Asn-231. Residues Asp-348 and His-381 each act as charge relay system in the active site. Cys-364 and Cys-409 are disulfide-bonded. N-linked (GlcNAc...) asparagine glycosylation is present at Asn-422.

Belongs to the AB hydrolase superfamily. Lipase family. Class Lip subfamily.

Its subcellular location is the secreted. The catalysed reaction is a triacylglycerol + H2O = a diacylglycerol + a fatty acid + H(+). Secreted lipase that is able to hydrolyze both the neutral triacylglycerols and the monopalmitate ester Tween 40, allowing the use of hydrolyzed products as carbon sources. Has broad lipolytic activity, which may be important for colonization and subsequent infection, therefore contributing to the persistence and virulence in human tissue. This chain is Lipase 6, found in Candida albicans (strain SC5314 / ATCC MYA-2876) (Yeast).